The chain runs to 362 residues: NAD(P)H-quinone oxidoreductase subunit 1, chloroplastic (362 aa).

A run of 8 helical transmembrane segments spans residues isoleucine 29–leucine 49, isoleucine 103–leucine 123, isoleucine 128–glycine 148, alanine 164–leucine 184, phenylalanine 202–leucine 222, tyrosine 247–serine 267, threonine 303–isoleucine 323, and leucine 335–threonine 355.

Belongs to the complex I subunit 1 family. As to quaternary structure, NDH is composed of at least 16 different subunits, 5 of which are encoded in the nucleus.

It localises to the plastid. The protein localises to the chloroplast thylakoid membrane. It carries out the reaction a plastoquinone + NADH + (n+1) H(+)(in) = a plastoquinol + NAD(+) + n H(+)(out). The catalysed reaction is a plastoquinone + NADPH + (n+1) H(+)(in) = a plastoquinol + NADP(+) + n H(+)(out). In terms of biological role, NDH shuttles electrons from NAD(P)H:plastoquinone, via FMN and iron-sulfur (Fe-S) centers, to quinones in the photosynthetic chain and possibly in a chloroplast respiratory chain. The immediate electron acceptor for the enzyme in this species is believed to be plastoquinone. Couples the redox reaction to proton translocation, and thus conserves the redox energy in a proton gradient. This is NAD(P)H-quinone oxidoreductase subunit 1, chloroplastic from Agrostis stolonifera (Creeping bentgrass).